The following is a 620-amino-acid chain: MAU2 chromatid cohesion factor homolog (620 aa).

3 TPR repeats span residues Phe90–Asn123, Gly445–Glu478, and Ser485–Ile518.

The protein belongs to the SCC4/mau-2 family. Component of the cohesin loading complex.

The protein resides in the nucleus. It is found in the nucleoplasm. Functionally, required for association of the cohesin complex with chromatin during interphase. Plays a role in sister chromatid cohesion and normal progression through prometaphase. The chain is MAU2 chromatid cohesion factor homolog from Aedes aegypti (Yellowfever mosquito).